Here is a 284-residue protein sequence, read N- to C-terminus: 4-diphosphocytidyl-2-C-methyl-D-erythritol kinase (284 aa).

Residue K14 is part of the active site. Position 98–108 (P98–S108) interacts with ATP. D140 is a catalytic residue.

The protein belongs to the GHMP kinase family. IspE subfamily.

It carries out the reaction 4-CDP-2-C-methyl-D-erythritol + ATP = 4-CDP-2-C-methyl-D-erythritol 2-phosphate + ADP + H(+). It functions in the pathway isoprenoid biosynthesis; isopentenyl diphosphate biosynthesis via DXP pathway; isopentenyl diphosphate from 1-deoxy-D-xylulose 5-phosphate: step 3/6. Its function is as follows. Catalyzes the phosphorylation of the position 2 hydroxy group of 4-diphosphocytidyl-2C-methyl-D-erythritol. This Shewanella denitrificans (strain OS217 / ATCC BAA-1090 / DSM 15013) protein is 4-diphosphocytidyl-2-C-methyl-D-erythritol kinase.